The sequence spans 124 residues: Large ribosomal subunit protein bL12 (124 aa).

It belongs to the bacterial ribosomal protein bL12 family. As to quaternary structure, homodimer. Part of the ribosomal stalk of the 50S ribosomal subunit. Forms a multimeric L10(L12)X complex, where L10 forms an elongated spine to which 2 to 4 L12 dimers bind in a sequential fashion. Binds GTP-bound translation factors.

In terms of biological role, forms part of the ribosomal stalk which helps the ribosome interact with GTP-bound translation factors. Is thus essential for accurate translation. The sequence is that of Large ribosomal subunit protein bL12 from Burkholderia lata (strain ATCC 17760 / DSM 23089 / LMG 22485 / NCIMB 9086 / R18194 / 383).